Consider the following 136-residue polypeptide: Large ribosomal subunit protein uL16 (136 aa).

It belongs to the universal ribosomal protein uL16 family. Part of the 50S ribosomal subunit.

In terms of biological role, binds 23S rRNA and is also seen to make contacts with the A and possibly P site tRNAs. This chain is Large ribosomal subunit protein uL16, found in Aliivibrio fischeri (strain ATCC 700601 / ES114) (Vibrio fischeri).